We begin with the raw amino-acid sequence, 467 residues long: Hydroxyacid-oxoacid transhydrogenase, mitochondrial (467 aa).

The residue at position 445 (lysine 445) is an N6-acetyllysine. Serine 452 bears the Phosphoserine mark.

This sequence belongs to the iron-containing alcohol dehydrogenase family. Hydroxyacid-oxoacid transhydrogenase subfamily.

It is found in the mitochondrion. The catalysed reaction is (S)-3-hydroxybutanoate + 2-oxoglutarate = (R)-2-hydroxyglutarate + acetoacetate. It catalyses the reaction 4-hydroxybutanoate + 2-oxoglutarate = (R)-2-hydroxyglutarate + succinate semialdehyde. In terms of biological role, catalyzes the cofactor-independent reversible oxidation of gamma-hydroxybutyrate (GHB) to succinic semialdehyde (SSA) coupled to reduction of 2-ketoglutarate (2-KG) to D-2-hydroxyglutarate (D-2-HG). L-3-hydroxybutyrate (L-3-OHB) is also a substrate for HOT when using 2-KG as hydrogen acceptor, resulting in the formation of D-2-HG. The protein is Hydroxyacid-oxoacid transhydrogenase, mitochondrial (ADHFE1) of Pongo abelii (Sumatran orangutan).